The following is a 92-amino-acid chain: Small ribosomal subunit protein uS19 (92 aa).

The protein belongs to the universal ribosomal protein uS19 family.

Protein S19 forms a complex with S13 that binds strongly to the 16S ribosomal RNA. This is Small ribosomal subunit protein uS19 from Shigella boydii serotype 18 (strain CDC 3083-94 / BS512).